A 437-amino-acid chain; its full sequence is Zinc finger protein 491 (437 aa).

The C2H2-type 1; degenerate zinc-finger motif lies at 35–59 (KSCESGTCGEIFMGYSSFNRNIRTD). The C2H2-type 2; degenerate zinc finger occupies 103-125 (FDCKECEKSFISPASIRRYMVTH). 11 C2H2-type zinc fingers span residues 131-153 (YKCK…ERTH), 159-181 (YECK…ERTH), 187-209 (YECK…ERTH), 215-237 (YKCK…ERTH), 243-265 (YECK…MRMH), 271-293 (HKCK…ERSH), 299-321 (YKCK…ERTH), 327-349 (DGCK…GRTH), 355-377 (YECK…ERTH), 383-405 (YECK…ERIH), and 411-433 (YQCK…ERTH).

Belongs to the krueppel C2H2-type zinc-finger protein family.

It localises to the nucleus. Functionally, may be involved in transcriptional regulation. The sequence is that of Zinc finger protein 491 (ZNF491) from Homo sapiens (Human).